Here is an 818-residue protein sequence, read N- to C-terminus: Myosin-A (818 aa).

A Phosphoserine; by PKG modification is found at S19. The Myosin motor domain occupies 97 to 771 (MSFGDIGLLN…GAKILTKIQR (675 aa)). 191 to 198 (GESGAGKT) serves as a coordination point for ATP. The tract at residues 661–671 (PHFIRCIKPNE) is actin-binding. A tail region spans residues 773 to 818 (KLVEWENCVSVIEAAILKHKYKQKVNKNIPSLLRVQAHIRKKMVAQ).

Belongs to the TRAFAC class myosin-kinesin ATPase superfamily. Myosin family. In terms of assembly, component of the glideosome complex composed of GAP50, GAP45, MTIP and MyoA; the complex is formed during the late schizont stage and in merozoites. MyoA, MTIP and GAP45 probably form an initial complex in the cytoplasm which is then recruited to the outer face of the inner membrane complex via the interaction with GAP50. Interacts with ACT1.

It localises to the cell membrane. Its function is as follows. Myosins are actin-based motor molecules with ATPase activity. Unconventional myosins serve in intracellular movements. Their highly divergent tails are presumed to bind to membranous compartments, which would be moved relative to actin filaments. In Plasmodium falciparum (isolate 3D7), this protein is Myosin-A.